Consider the following 397-residue polypeptide: 1-deoxy-D-xylulose 5-phosphate reductoisomerase (397 aa).

Residues Thr-10, Gly-11, Ser-12, Ile-13, Gly-36, Lys-37, Asn-38, and Asn-124 each contribute to the NADPH site. Residue Lys-125 coordinates 1-deoxy-D-xylulose 5-phosphate. Position 126 (Glu-126) interacts with NADPH. Asp-150 contacts Mn(2+). The 1-deoxy-D-xylulose 5-phosphate site is built by Ser-151, Glu-152, Ser-186, and His-209. Glu-152 contacts Mn(2+). Position 215 (Gly-215) interacts with NADPH. Positions 222, 227, 228, and 231 each coordinate 1-deoxy-D-xylulose 5-phosphate. Residue Glu-231 coordinates Mn(2+).

It belongs to the DXR family. As to quaternary structure, homodimer. It depends on Mg(2+) as a cofactor. Requires Mn(2+) as cofactor.

The catalysed reaction is 2-C-methyl-D-erythritol 4-phosphate + NADP(+) = 1-deoxy-D-xylulose 5-phosphate + NADPH + H(+). It participates in isoprenoid biosynthesis; isopentenyl diphosphate biosynthesis via DXP pathway; isopentenyl diphosphate from 1-deoxy-D-xylulose 5-phosphate: step 1/6. Catalyzes the NADPH-dependent rearrangement and reduction of 1-deoxy-D-xylulose-5-phosphate (DXP) to 2-C-methyl-D-erythritol 4-phosphate (MEP). In Proteus mirabilis (strain HI4320), this protein is 1-deoxy-D-xylulose 5-phosphate reductoisomerase.